A 176-amino-acid chain; its full sequence is Translation initiation factor IF-3 (176 aa).

This sequence belongs to the IF-3 family. In terms of assembly, monomer.

It localises to the cytoplasm. Functionally, IF-3 binds to the 30S ribosomal subunit and shifts the equilibrium between 70S ribosomes and their 50S and 30S subunits in favor of the free subunits, thus enhancing the availability of 30S subunits on which protein synthesis initiation begins. In Streptococcus agalactiae serotype Ia (strain ATCC 27591 / A909 / CDC SS700), this protein is Translation initiation factor IF-3.